We begin with the raw amino-acid sequence, 318 residues long: tRNA uridine(34) hydroxylase (318 aa).

In terms of domain architecture, Rhodanese spans 123–217; sequence EDDDTVIIDA…YGKDPETKSE (95 aa). The active-site Cysteine persulfide intermediate is the Cys-177.

The protein belongs to the TrhO family.

It carries out the reaction uridine(34) in tRNA + AH2 + O2 = 5-hydroxyuridine(34) in tRNA + A + H2O. In terms of biological role, catalyzes oxygen-dependent 5-hydroxyuridine (ho5U) modification at position 34 in tRNAs. In Staphylococcus aureus (strain COL), this protein is tRNA uridine(34) hydroxylase.